Here is a 503-residue protein sequence, read N- to C-terminus: 3-octaprenyl-4-hydroxybenzoate carboxy-lyase (503 aa).

Asn-176 contributes to the Mn(2+) binding site. Residues 179 to 181, 193 to 195, and 198 to 199 contribute to the prenylated FMN site; these read IYR, RWL, and RG. Residue Glu-242 coordinates Mn(2+). The active-site Proton donor is the Asp-303.

Belongs to the UbiD family. Homohexamer. It depends on prenylated FMN as a cofactor. Mn(2+) serves as cofactor.

Its subcellular location is the cell membrane. It catalyses the reaction a 4-hydroxy-3-(all-trans-polyprenyl)benzoate + H(+) = a 2-(all-trans-polyprenyl)phenol + CO2. It participates in cofactor biosynthesis; ubiquinone biosynthesis. In terms of biological role, catalyzes the decarboxylation of 3-octaprenyl-4-hydroxy benzoate to 2-octaprenylphenol, an intermediate step in ubiquinone biosynthesis. This Ralstonia nicotianae (strain ATCC BAA-1114 / GMI1000) (Ralstonia solanacearum) protein is 3-octaprenyl-4-hydroxybenzoate carboxy-lyase.